Consider the following 407-residue polypeptide: S-adenosylmethionine synthase (407 aa).

H19 is an ATP binding site. D21 is a Mg(2+) binding site. E47 serves as a coordination point for K(+). Residues E60 and Q103 each coordinate L-methionine. Residues 103–113 form a flexible loop region; that stretch reads QSQEIADGVDN. The interval 107 to 134 is disordered; the sequence is IADGVDNSDEARTNGDVEEDDRAGAGDQ. ATP contacts are provided by residues 178 to 180, D258, 264 to 265, A281, and K285; these read DGK and RK. D258 is an L-methionine binding site. L-methionine is bound at residue K289.

Belongs to the AdoMet synthase family. In terms of assembly, homotetramer; dimer of dimers. Requires Mg(2+) as cofactor. K(+) is required as a cofactor.

Its subcellular location is the cytoplasm. It carries out the reaction L-methionine + ATP + H2O = S-adenosyl-L-methionine + phosphate + diphosphate. The protein operates within amino-acid biosynthesis; S-adenosyl-L-methionine biosynthesis; S-adenosyl-L-methionine from L-methionine: step 1/1. Its function is as follows. Catalyzes the formation of S-adenosylmethionine (AdoMet) from methionine and ATP. The overall synthetic reaction is composed of two sequential steps, AdoMet formation and the subsequent tripolyphosphate hydrolysis which occurs prior to release of AdoMet from the enzyme. This chain is S-adenosylmethionine synthase, found in Corynebacterium glutamicum (strain ATCC 13032 / DSM 20300 / JCM 1318 / BCRC 11384 / CCUG 27702 / LMG 3730 / NBRC 12168 / NCIMB 10025 / NRRL B-2784 / 534).